Reading from the N-terminus, the 167-residue chain is MYKQIEIFTDGSCLGNPGPGGCAGILRYRQYKKEFSAGYHITTNNRMELMAAIIALESLKNSCQIILYSDSQYLLTGITQWIQIWKKHHWKTADSKLVKNIDLWRRLDIAIQPHNIKDWRWLKSHTGHPDNERCDQLARKAAKYPLNKDFDNNPVVLYNDNDLMKID.

Residues 1 to 143 (MYKQIEIFTD…CDQLARKAAK (143 aa)) enclose the RNase H type-1 domain. 4 residues coordinate Mg(2+): Asp-10, Glu-48, Asp-70, and Asp-135.

This sequence belongs to the RNase H family. In terms of assembly, monomer. It depends on Mg(2+) as a cofactor.

The protein resides in the cytoplasm. The enzyme catalyses Endonucleolytic cleavage to 5'-phosphomonoester.. Endonuclease that specifically degrades the RNA of RNA-DNA hybrids. The polypeptide is Ribonuclease H (Blochmanniella floridana).